A 269-amino-acid chain; its full sequence is RBPJ-interacting and tubulin-associated protein 1 (269 aa).

Residues 5 to 17 carry the Nuclear export signal motif; the sequence is VELAVSGMQTLGL. Disordered regions lie at residues 66–105 and 141–269; these read VGKE…PISH and LWTP…PPWK. Residues 80–92 are compositionally biased toward polar residues; sequence CETTPSRGSTPTL. Residues 92–108 carry the Nuclear localization signal motif; it reads LTPRKKNKYRPISHTPS. Residues 128–156 form an interaction with RBPJ/RBPSUH region; that stretch reads RMAKGDAAKLRALLWTPPPTPRGSHSPRP. The tract at residues 156–269 is interaction with tubulin; that stretch reads PREAPLRAIH…ATQKPKPPWK (114 aa). Polar residues predominate over residues 200-253; sequence HSLTHLNVPSTGHPATSAPHTNGPQDLRPSTSGVTFRSPLVTSRARSVSISVPS.

It belongs to the RITA family. In terms of assembly, interacts with RBPJ/RBPSUH.

Its subcellular location is the cytoplasm. The protein resides in the nucleus. It localises to the cytoskeleton. It is found in the microtubule organizing center. The protein localises to the centrosome. Tubulin-binding protein that acts as a negative regulator of Notch signaling pathway. Shuttles between the cytoplasm and the nucleus and mediates the nuclear export of RBPJ/RBPSUH, thereby preventing the interaction between RBPJ/RBPSUH and NICD product of Notch proteins (Notch intracellular domain), leading to down-regulate Notch-mediated transcription. May play a role in neurogenesis. The polypeptide is RBPJ-interacting and tubulin-associated protein 1 (RITA1) (Homo sapiens (Human)).